A 183-amino-acid chain; its full sequence is Helofensin-2 (183 aa).

An N-terminal signal peptide occupies residues Met1 to Gly26. The C(6)C(4)C(9)C(6)CC 1; approximate repeat unit spans residues Ala27 to Ala64. The stretch at Arg65 to Gln101 is one C(6)C(4)C(9)C(6)CC 2; approximate repeat. Residues Arg102 to Lys139 form a C(6)C(4)C(9)C(6)CC 3; approximate repeat. One copy of the C(6)C(4)C(9)C(6)CC 4; approximate repeat lies at Arg140–Lys177.

Belongs to the beta-defensin family. Helofensin subfamily. Expressed by the mandibular venom gland.

The protein localises to the secreted. Functionally, lethal toxin which possesses an inhibitory effect on direct electrical stimulation of the isolated hemi-diaphragm of mice. Neither hemorrhagic nor hemolytic activities are detected. Phospholipase A2 activity, proteolytic activity and arginine esterolytic activity are absent. This chain is Helofensin-2, found in Heloderma suspectum cinctum (Banded Gila monster).